Consider the following 155-residue polypeptide: Small ribosomal subunit protein uS17 (155 aa).

Belongs to the universal ribosomal protein uS17 family. Component of the small ribosomal subunit. Mature ribosomes consist of a small (40S) and a large (60S) subunit. The 40S subunit contains about 32 different proteins and 1 molecule of RNA (18S). The 60S subunit contains 45 different proteins and 3 molecules of RNA (25S, 5.8S and 5S).

It is found in the cytoplasm. Component of the ribosome, a large ribonucleoprotein complex responsible for the synthesis of proteins in the cell. The small ribosomal subunit (SSU) binds messenger RNAs (mRNAs) and translates the encoded message by selecting cognate aminoacyl-transfer RNA (tRNA) molecules. The large subunit (LSU) contains the ribosomal catalytic site termed the peptidyl transferase center (PTC), which catalyzes the formation of peptide bonds, thereby polymerizing the amino acids delivered by tRNAs into a polypeptide chain. The nascent polypeptides leave the ribosome through a tunnel in the LSU and interact with protein factors that function in enzymatic processing, targeting, and the membrane insertion of nascent chains at the exit of the ribosomal tunnel. The sequence is that of Small ribosomal subunit protein uS17 from Candida albicans (strain SC5314 / ATCC MYA-2876) (Yeast).